We begin with the raw amino-acid sequence, 280 residues long: Probable endonuclease 4 (280 aa).

The Zn(2+) site is built by H69, H109, E145, D179, H182, H216, D229, H231, and E261.

The protein belongs to the AP endonuclease 2 family. It depends on Zn(2+) as a cofactor.

The enzyme catalyses Endonucleolytic cleavage to 5'-phosphooligonucleotide end-products.. In terms of biological role, endonuclease IV plays a role in DNA repair. It cleaves phosphodiester bonds at apurinic or apyrimidinic (AP) sites, generating a 3'-hydroxyl group and a 5'-terminal sugar phosphate. This chain is Probable endonuclease 4, found in Aliarcobacter butzleri (strain RM4018) (Arcobacter butzleri).